The following is a 267-amino-acid chain: Hydroxyethylthiazole kinase (267 aa).

Substrate is bound at residue Met-44. Positions 120 and 166 each coordinate ATP. Gly-193 is a substrate binding site.

It belongs to the Thz kinase family. Requires Mg(2+) as cofactor.

It catalyses the reaction 5-(2-hydroxyethyl)-4-methylthiazole + ATP = 4-methyl-5-(2-phosphooxyethyl)-thiazole + ADP + H(+). The protein operates within cofactor biosynthesis; thiamine diphosphate biosynthesis; 4-methyl-5-(2-phosphoethyl)-thiazole from 5-(2-hydroxyethyl)-4-methylthiazole: step 1/1. Its function is as follows. Catalyzes the phosphorylation of the hydroxyl group of 4-methyl-5-beta-hydroxyethylthiazole (THZ). The polypeptide is Hydroxyethylthiazole kinase (Desulfitobacterium hafniense (strain DSM 10664 / DCB-2)).